The sequence spans 97 residues: Defensin-A2 (97 aa).

Positions 1-19 are cleaved as a signal peptide; that stretch reads MRTLSLLLALLFLAAQTLA. The propeptide occupies 20 to 61; it reads QPIDEGAEEVITEEPEITETQDPTTIMLIERGIGGDSTDATR. Disulfide bonds link cysteine 66/cysteine 93, cysteine 68/cysteine 82, and cysteine 72/cysteine 92. Positions 96–97 are excised as a propeptide; sequence TS.

It belongs to the alpha-defensin family. Highly expressed in intestine, expressed at lower levels in spleen, and at very low levels in kidney and lung.

It localises to the secreted. Has antimicrobial activity. In Ornithorhynchus anatinus (Duckbill platypus), this protein is Defensin-A2.